A 245-amino-acid polypeptide reads, in one-letter code: 1-(5-phosphoribosyl)-5-[(5-phosphoribosylamino)methylideneamino] imidazole-4-carboxamide isomerase (245 aa).

Asp7 functions as the Proton acceptor in the catalytic mechanism. The active-site Proton donor is Asp129.

Belongs to the HisA/HisF family.

The protein localises to the cytoplasm. The enzyme catalyses 1-(5-phospho-beta-D-ribosyl)-5-[(5-phospho-beta-D-ribosylamino)methylideneamino]imidazole-4-carboxamide = 5-[(5-phospho-1-deoxy-D-ribulos-1-ylimino)methylamino]-1-(5-phospho-beta-D-ribosyl)imidazole-4-carboxamide. Its pathway is amino-acid biosynthesis; L-histidine biosynthesis; L-histidine from 5-phospho-alpha-D-ribose 1-diphosphate: step 4/9. The chain is 1-(5-phosphoribosyl)-5-[(5-phosphoribosylamino)methylideneamino] imidazole-4-carboxamide isomerase from Aliivibrio fischeri (strain ATCC 700601 / ES114) (Vibrio fischeri).